Here is a 420-residue protein sequence, read N- to C-terminus: Pre-mRNA-splicing factor RBM22 (420 aa).

Ala-2 carries the post-translational modification N-acetylalanine. A phosphoserine mark is found at Ser-4 and Ser-102. Residues Lys-139 and Lys-149 each participate in a glycyl lysine isopeptide (Lys-Gly) (interchain with G-Cter in SUMO2) cross-link. The C3H1-type zinc-finger motif lies at 159-186; the sequence is RNRPHICSFWVKGECKRGEECPYRHEKP. Lys-212 carries the post-translational modification N6-acetyllysine. Positions 232-305 constitute an RRM domain; sequence TTLYVGGLGD…RRLNVKWGRS (74 aa). Lys-290 is covalently cross-linked (Glycyl lysine isopeptide (Lys-Gly) (interchain with G-Cter in SUMO2)). 2 disordered regions span residues 303–343 and 372–420; these read GRSQ…AAEE and APPP…HSSP. The span at 309 to 318 shows a compositional bias: basic and acidic residues; the sequence is RGKEKEKDGT.

It belongs to the SLT11 family. As to quaternary structure, component of the pre-catalytic and catalytic spliceosome complexes. Component of the postcatalytic spliceosome P complex. Interacts with PDCD6; the interaction induces translocation of PDCD6 in the cytoplasm. Interacts with PPIL1.

The protein localises to the nucleus. The protein resides in the cytoplasm. Functionally, required for pre-mRNA splicing as component of the activated spliceosome. Involved in the first step of pre-mRNA splicing. Binds directly to the internal stem-loop (ISL) domain of the U6 snRNA and to the pre-mRNA intron near the 5' splice site during the activation and catalytic phases of the spliceosome cycle. Involved in both translocations of the nuclear SLU7 to the cytoplasm and the cytosolic calcium-binding protein PDCD6 to the nucleus upon cellular stress responses. The polypeptide is Pre-mRNA-splicing factor RBM22 (RBM22) (Bos taurus (Bovine)).